The sequence spans 464 residues: Protein transport protein HofB homolog (464 aa).

Position 264 to 271 (264 to 271 (GPTGSGKS)) interacts with ATP.

This sequence belongs to the GSP E family.

This is Protein transport protein HofB homolog (hofB) from Haemophilus influenzae (strain ATCC 51907 / DSM 11121 / KW20 / Rd).